A 57-amino-acid polypeptide reads, in one-letter code: Small ribosomal subunit protein bS21 (57 aa).

Residues 32 to 42 (VRRREHYEKPS) are compositionally biased toward basic and acidic residues. Positions 32 to 57 (VRRREHYEKPSQRRKRKLEASRRRRR) are disordered. Positions 43–57 (QRRKRKLEASRRRRR) are enriched in basic residues.

The protein belongs to the bacterial ribosomal protein bS21 family.

This Synechococcus elongatus (strain ATCC 33912 / PCC 7942 / FACHB-805) (Anacystis nidulans R2) protein is Small ribosomal subunit protein bS21.